Here is a 66-residue protein sequence, read N- to C-terminus: Delta-buthitoxin-Hj1a (66 aa).

The LCN-type CS-alpha/beta domain maps to 4–66 (RDAYIAQPHN…EPIKVPGKCH (63 aa)). Disulfide bonds link cysteine 14-cysteine 65, cysteine 18-cysteine 38, cysteine 24-cysteine 48, and cysteine 28-cysteine 50.

Belongs to the long (4 C-C) scorpion toxin superfamily. Sodium channel inhibitor family. Alpha subfamily. Expressed by the venom gland.

The protein resides in the secreted. In terms of biological role, this recombinant toxin slows fast inactivation on Nav1.1/SCN1A (EC(50)=17 nM), Nav1.4/SN4A (EC(50)=7.5 nM), Nav1.5/SCN5A (EC(50)=9.2 nM) and Nav1.6/SCN8A (EC(50)=37.3 nM) voltage-gated sodium channels. On Nav1.1/SCN1A channel, it acts as an agonist by inducing a shift in both the voltage dependence of channel inactivation (alpha-toxin activity) and activation (beta-toxin activity). In vivo, shows moderate insecticidal activities. It induces irreversible paralysis in blowflies and lethal effects in D.melanogaster. In Hottentotta judaicus (Black scorpion), this protein is Delta-buthitoxin-Hj1a.